A 404-amino-acid chain; its full sequence is Exodeoxyribonuclease 7 large subunit (404 aa).

This sequence belongs to the XseA family. Heterooligomer composed of large and small subunits.

It localises to the cytoplasm. It carries out the reaction Exonucleolytic cleavage in either 5'- to 3'- or 3'- to 5'-direction to yield nucleoside 5'-phosphates.. Functionally, bidirectionally degrades single-stranded DNA into large acid-insoluble oligonucleotides, which are then degraded further into small acid-soluble oligonucleotides. This is Exodeoxyribonuclease 7 large subunit from Ruminiclostridium cellulolyticum (strain ATCC 35319 / DSM 5812 / JCM 6584 / H10) (Clostridium cellulolyticum).